The sequence spans 1376 residues: Protein FAM135B (1376 aa).

A compositionally biased stretch (acidic residues) spans 431 to 442 (NEDECEFSEESP). The segment at 431–489 (NEDECEFSEESPSENTHVGSKPHSIQSTTVHENASFEKPNVGTKAQEDCSTEGPEQGFD) is disordered. Positions 443–462 (SENTHVGSKPHSIQSTTVHE) are enriched in polar residues.

The protein belongs to the FAM135 family.

The chain is Protein FAM135B (fam135b) from Xenopus laevis (African clawed frog).